Here is an 85-residue protein sequence, read N- to C-terminus: RNA-binding protein Hfq (85 aa).

Residues D9–V68 enclose the Sm domain. Residues R66–E85 are disordered. Over residues H72 to E85 the composition is skewed to basic and acidic residues.

It belongs to the Hfq family. Homohexamer.

RNA chaperone that binds small regulatory RNA (sRNAs) and mRNAs to facilitate mRNA translational regulation in response to envelope stress, environmental stress and changes in metabolite concentrations. Also binds with high specificity to tRNAs. The sequence is that of RNA-binding protein Hfq from Photobacterium profundum (strain SS9).